A 181-amino-acid polypeptide reads, in one-letter code: Interleukin-10 (181 aa).

A signal peptide spans 1 to 19 (MHGSALLCCCLVLLAGVGA). Intrachain disulfides connect C31–C129 and C81–C135. N137 carries an N-linked (GlcNAc...) asparagine glycan.

It belongs to the IL-10 family. As to quaternary structure, homodimer. Interacts with IL10RA and IL10RB.

The protein localises to the secreted. Its function is as follows. Major immune regulatory cytokine that acts on many cells of the immune system where it has profound anti-inflammatory functions, limiting excessive tissue disruption caused by inflammation. Mechanistically, IL10 binds to its heterotetrameric receptor comprising IL10RA and IL10RB leading to JAK1 and STAT2-mediated phosphorylation of STAT3. In turn, STAT3 translocates to the nucleus where it drives expression of anti-inflammatory mediators. Targets antigen-presenting cells (APCs) such as macrophages and monocytes and inhibits their release of pro-inflammatory cytokines including granulocyte-macrophage colony-stimulating factor /GM-CSF, granulocyte colony-stimulating factor/G-CSF, IL-1 alpha, IL-1 beta, IL-6, IL-8 and TNF-alpha. Also interferes with antigen presentation by reducing the expression of MHC-class II and co-stimulatory molecules, thereby inhibiting their ability to induce T cell activation. In addition, controls the inflammatory response of macrophages by reprogramming essential metabolic pathways including mTOR signaling. This chain is Interleukin-10 (IL10), found in Canis lupus familiaris (Dog).